Reading from the N-terminus, the 183-residue chain is Small ribosomal subunit protein uS5 (183 aa).

Residues 11–71 (FLERVVGINR…EEAKKSFFRV (61 aa)) form the S5 DRBM domain.

Belongs to the universal ribosomal protein uS5 family. In terms of assembly, part of the 30S ribosomal subunit. Contacts proteins S4 and S8.

With S4 and S12 plays an important role in translational accuracy. Functionally, located at the back of the 30S subunit body where it stabilizes the conformation of the head with respect to the body. This is Small ribosomal subunit protein uS5 from Micrococcus luteus (Micrococcus lysodeikticus).